The following is a 587-amino-acid chain: Integrator complex subunit 14 (587 aa).

The region spanning 3-113 (TLIALDASLS…NILQVVVFTD (111 aa)) is the VWFA domain. Disordered regions lie at residues 190-211 (KSSDAVEGNPNPNPNPSHKSEL) and 304-331 (REKSGSSRRSGNLSAAAKPPKLNLDTSN).

It belongs to the Integrator subunit 14 family. As to quaternary structure, belongs to the multiprotein complex Integrator, at least composed of IntS1, IntS2, IntS3, IntS4, omd/IntS5, IntS6, defl/IntS7, IntS8, IntS9, IntS10, IntS11, IntS12, asun/IntS13, IntS14 and IntS15. The core complex associates with protein phosphatase 2A subunits mts/PP2A and Pp2A-29B, to form the Integrator-PP2A (INTAC) complex.

It localises to the nucleus. Component of the integrator complex, a multiprotein complex that terminates RNA polymerase II (Pol II) transcription in the promoter-proximal region of genes. The integrator complex provides a quality checkpoint during transcription elongation by driving premature transcription termination of transcripts that are unfavorably configured for transcriptional elongation: the complex terminates transcription by (1) catalyzing dephosphorylation of the C-terminal domain (CTD) of Pol II subunit Polr2A/Rbp1 and Spt5, and (2) degrading the exiting nascent RNA transcript via endonuclease activity. The integrator complex is also involved in the 3'-end processing of the U7 snRNA, and also the spliceosomal snRNAs U1, U2, U4 and U5. The polypeptide is Integrator complex subunit 14 (Drosophila melanogaster (Fruit fly)).